A 200-amino-acid polypeptide reads, in one-letter code: Cuticle protein 19.8 (200 aa).

3 consecutive repeat copies span residues 20 to 23 (AAPA), 26 to 29 (AAPA), and 43 to 46 (AAPA). The region spanning 56–127 (HPQYSYGYSV…EPGVHAPIAA (72 aa)) is the Chitin-binding type R&amp;R domain. Residues 70 to 89 (TGDSKSQQESRDGDVVQGSY) form a disordered region. 5 consecutive repeat copies span residues 126–129 (AAPV), 144–147 (AAPA), 150–153 (AAPV), 159–162 (AAPA), and 177–180 (AAPA).

In terms of biological role, component of the cuticle of migratory locust which contains more than 100 different structural proteins. This chain is Cuticle protein 19.8, found in Locusta migratoria (Migratory locust).